We begin with the raw amino-acid sequence, 142 residues long: Galactose-binding lectin l-1 (142 aa).

The Galectin domain maps to 3–134 (FVEVKNLIMK…DATVKNISVN (132 aa)). 68–74 (WQEEQRD) lines the a beta-D-galactoside pocket. Asn130 carries N-linked (GlcNAc...) asparagine glycosylation.

Homodimer. In terms of processing, the N-terminus is blocked. Skin; highest expression in that of individuals showing resistance to infectious disease.

Its subcellular location is the secreted. In terms of biological role, involved in host defense at the body surface. Causes agglutination of the Gram-positive bacterium S.difficile. Possesses calcium-independent hemagglutinating activity. The sequence is that of Galactose-binding lectin l-1 from Anguilla japonica (Japanese eel).